Consider the following 319-residue polypeptide: Small ribosomal subunit protein mS35 (319 aa).

The transit peptide at 1–30 directs the protein to the mitochondrion; that stretch reads MKVPLGLWKVSRGNLWSTQKRVLTMSRCLN.

It belongs to the mitochondrion-specific ribosomal protein mS35 family. In terms of assembly, component of the mitochondrial small ribosomal subunit (mt-SSU). Mature yeast 74S mitochondrial ribosomes consist of a small (37S) and a large (54S) subunit. The 37S small subunit contains a 15S ribosomal RNA (15S mt-rRNA) and 34 different proteins. The 54S large subunit contains a 21S rRNA (21S mt-rRNA) and 46 different proteins.

The protein localises to the mitochondrion. Functionally, component of the mitochondrial ribosome (mitoribosome), a dedicated translation machinery responsible for the synthesis of mitochondrial genome-encoded proteins, including at least some of the essential transmembrane subunits of the mitochondrial respiratory chain. The mitoribosomes are attached to the mitochondrial inner membrane and translation products are cotranslationally integrated into the membrane. In Saccharomyces cerevisiae (strain ATCC 204508 / S288c) (Baker's yeast), this protein is Small ribosomal subunit protein mS35 (RSM24).